A 69-amino-acid polypeptide reads, in one-letter code: Neurotoxin Cex5 (69 aa).

A signal peptide is located at residue alanine 1. The 66-residue stretch at 2–67 (KDGYLVSKST…TYPIPGKSCG (66 aa)) folds into the LCN-type CS-alpha/beta domain. 4 cysteine pairs are disulfide-bonded: cysteine 13/cysteine 66, cysteine 17/cysteine 42, cysteine 26/cysteine 47, and cysteine 30/cysteine 49. Cysteine 66 carries the post-translational modification Cysteine amide. Positions 67–69 (GKK) are excised as a propeptide.

The protein belongs to the long (4 C-C) scorpion toxin superfamily. Sodium channel inhibitor family. Beta subfamily. As to expression, expressed by the venom gland.

It localises to the secreted. Its function is as follows. Beta toxins bind voltage-independently at site-4 of sodium channels (Nav) and shift the voltage of activation toward more negative potentials thereby affecting sodium channel activation and promoting spontaneous and repetitive firing. The polypeptide is Neurotoxin Cex5 (Centruroides exilicauda (Bark scorpion)).